A 295-amino-acid polypeptide reads, in one-letter code: Shikimate dehydrogenase (NADP(+)) (295 aa).

Shikimate is bound by residues 24 to 26 (SRS) and T71. K75 acts as the Proton acceptor in catalysis. E87 is an NADP(+) binding site. The shikimate site is built by N96 and D111. NADP(+) contacts are provided by residues 136–140 (GAGGA), 160–165 (NRTASR), and M233. A shikimate-binding site is contributed by Y235. Residue G256 participates in NADP(+) binding.

It belongs to the shikimate dehydrogenase family. As to quaternary structure, homodimer.

It carries out the reaction shikimate + NADP(+) = 3-dehydroshikimate + NADPH + H(+). It participates in metabolic intermediate biosynthesis; chorismate biosynthesis; chorismate from D-erythrose 4-phosphate and phosphoenolpyruvate: step 4/7. Involved in the biosynthesis of the chorismate, which leads to the biosynthesis of aromatic amino acids. Catalyzes the reversible NADPH linked reduction of 3-dehydroshikimate (DHSA) to yield shikimate (SA). This Cupriavidus necator (strain ATCC 17699 / DSM 428 / KCTC 22496 / NCIMB 10442 / H16 / Stanier 337) (Ralstonia eutropha) protein is Shikimate dehydrogenase (NADP(+)).